The chain runs to 392 residues: Glyceraldehyde-3-phosphate dehydrogenase A, chloroplastic (392 aa).

The N-terminal 56 residues, 1-56, are a transit peptide targeting the chloroplast; that stretch reads NSSLQVSNKGFSEFSGLRTSSAIPFGRKTNDDLLSVVAFQTSVIGGGNSKRGVVEA. NADP(+) is bound by residues 67–68, aspartate 91, and arginine 136; that span reads RI. D-glyceraldehyde 3-phosphate is bound by residues 208-210, threonine 239, arginine 254, 267-268, and arginine 290; these read SCT and TG. The active-site Nucleophile is the cysteine 209. Asparagine 372 contacts NADP(+).

It belongs to the glyceraldehyde-3-phosphate dehydrogenase family. In terms of assembly, tetramer of either four A chains (GAPDH 2) or two A and two B chains (GAPDH 1).

It is found in the plastid. The protein localises to the chloroplast. The catalysed reaction is D-glyceraldehyde 3-phosphate + phosphate + NADP(+) = (2R)-3-phospho-glyceroyl phosphate + NADPH + H(+). It functions in the pathway carbohydrate biosynthesis; Calvin cycle. The polypeptide is Glyceraldehyde-3-phosphate dehydrogenase A, chloroplastic (GAPA) (Nicotiana tabacum (Common tobacco)).